Here is a 402-residue protein sequence, read N- to C-terminus: Large ribosomal subunit protein uL3 (402 aa).

The interval 1–35 (MSHRKFSAPRHGSMGFTPKKRSKRHRGKVKAFPKD) is disordered. A compositionally biased stretch (basic residues) spans 18–31 (PKKRSKRHRGKVKA).

This sequence belongs to the universal ribosomal protein uL3 family.

It localises to the cytoplasm. The L3 protein is a component of the large subunit of cytoplasmic ribosomes. This is Large ribosomal subunit protein uL3 (RPL3) from Toxocara canis (Canine roundworm).